Consider the following 173-residue polypeptide: Archaemetzincin (173 aa).

Histidine 130 provides a ligand contact to Zn(2+). Glutamate 131 serves as the catalytic Proton acceptor. Histidine 134, histidine 140, cysteine 141, cysteine 146, cysteine 165, and cysteine 168 together coordinate Zn(2+).

Belongs to the peptidase M54 family. As to quaternary structure, monomer. Zn(2+) serves as cofactor.

Probable zinc metalloprotease whose natural substrate is unknown. The polypeptide is Archaemetzincin (Haloarcula marismortui (strain ATCC 43049 / DSM 3752 / JCM 8966 / VKM B-1809) (Halobacterium marismortui)).